A 32-amino-acid polypeptide reads, in one-letter code: Parigidin-br1 (32 aa).

The segment at residues 1 to 32 (GGSVPCGESCVFIPCITSLAGCSCKNKVCYYD) is a cross-link (cyclopeptide (Gly-Asp)). Disulfide bonds link C6/C22, C10/C24, and C15/C29.

Post-translationally, this is a cyclic peptide. In terms of tissue distribution, expressed in leaves, flowers, peduncles and seeds (at protein level).

Its function is as follows. Probably participates in a plant defense mechanism. Reduces growth of and increases mortality in larvae of D.saccharalis. Kills cultured SF-9 cells of S.frugiperda probably by disrupting plasma membranes. Has hemolytic activity against human erythrocytes. Has no antibacterial activity against E.coli strain ATCC 8739 and S.aureus strain ATCC 25923. The protein is Parigidin-br1 of Palicourea rigida.